A 377-amino-acid polypeptide reads, in one-letter code: MRKLFTSESVSEGHPDKICDQISDAILDEVLKQDPNAKVACETFATTNYLLIGGQITTTASVDYEKIARDVLRKIGYNNDAYGINADTCKIDIRVEQQSADIALGIDLDTEVIGAGDQGIMFGYATNESKTFLPLAITISHELVYLASKLRKEGKFKWARPDMKSQVTIDYTDESNPKIDTILMSIQHDDEMIEEEFKKFIKSEIMDVVAKEFELNTDFNVLINPTGRFVIGGPQGDTGLTGRKIIVDTYGGYSRHGGGAFSGKDATKVDRSAAYMARYAAKNLVASGLADKIEIQVSYAIGKPEPVSIFIETFGTEKVSKEVIAKALNENFDFSVNEIIKKLDLRKPTFLKTATYGHFGKDEFTWEQLDKVKTIKK.

His-14 contacts ATP. Asp-16 contacts Mg(2+). Residue Glu-42 coordinates K(+). Residue Gln-98 coordinates L-methionine. Residues 98-108 (QSADIALGIDL) are flexible loop. ATP contacts are provided by residues 162-164 (DMK), 228-229 (RF), Asp-237, 243-244 (RK), Ala-260, and Lys-264. Residue Asp-237 participates in L-methionine binding. L-methionine is bound at residue Lys-268.

It belongs to the AdoMet synthase family. Homotetramer; dimer of dimers. Requires Mg(2+) as cofactor. The cofactor is K(+).

It is found in the cytoplasm. It carries out the reaction L-methionine + ATP + H2O = S-adenosyl-L-methionine + phosphate + diphosphate. It functions in the pathway amino-acid biosynthesis; S-adenosyl-L-methionine biosynthesis; S-adenosyl-L-methionine from L-methionine: step 1/1. Its function is as follows. Catalyzes the formation of S-adenosylmethionine (AdoMet) from methionine and ATP. The overall synthetic reaction is composed of two sequential steps, AdoMet formation and the subsequent tripolyphosphate hydrolysis which occurs prior to release of AdoMet from the enzyme. The protein is S-adenosylmethionine synthase of Mesoplasma florum (strain ATCC 33453 / NBRC 100688 / NCTC 11704 / L1) (Acholeplasma florum).